We begin with the raw amino-acid sequence, 122 residues long: Ribonuclease pancreatic (122 aa).

Substrate-binding residues include Lys6 and Arg9. Residue His11 is the Proton acceptor of the active site. 4 disulfide bridges follow: Cys25–Cys83, Cys39–Cys94, Cys57–Cys109, and Cys64–Cys71. Substrate is bound by residues 40 to 44 (KPVNT), Lys65, and Arg84. Residue His117 is the Proton donor of the active site.

Belongs to the pancreatic ribonuclease family. Monomer. Interacts with and forms tight 1:1 complexes with RNH1. Dimerization of two such complexes may occur. Interaction with RNH1 inhibits this protein. Pancreas.

It is found in the secreted. The enzyme catalyses an [RNA] containing cytidine + H2O = an [RNA]-3'-cytidine-3'-phosphate + a 5'-hydroxy-ribonucleotide-3'-[RNA].. The catalysed reaction is an [RNA] containing uridine + H2O = an [RNA]-3'-uridine-3'-phosphate + a 5'-hydroxy-ribonucleotide-3'-[RNA].. Endonuclease that catalyzes the cleavage of RNA on the 3' side of pyrimidine nucleotides. Acts on single-stranded and double-stranded RNA. In Notamacropus rufogriseus (Red-necked wallaby), this protein is Ribonuclease pancreatic.